The primary structure comprises 426 residues: Selenate reductase subunit C (426 aa).

The next 10 membrane-spanning stretches (helical) occupy residues 5-25 (LYFTVLSFIAIVGVISLYIRL), 40-60 (WGLWIVFYIYFIGLSAGSFLL), 78-98 (LALFTAFFSLMAGLLFVLIDL), 119-139 (WEIQFYLIYMLLIVAEIWFLM), 187-207 (ILGIAGIPTAVGVHGGTGSLF), 223-243 (IIFLVSALVSGAALMLFLYSF), 261-281 (LLTLFIGIDLLLMIAEFLIGL), 302-322 (FIFWIGQIGMVIILPILLITI), 330-350 (MGLAGLSVVLGIVCVRWILVI), and 385-405 (VGLIGIVILLFSITVQLVPVF).

The protein belongs to the NrfD family. In terms of assembly, the complex is composed of three subunits: SrdA, SrdB and SrdC.

The protein resides in the cell membrane. It catalyses the reaction selenite + a quinone + H2O = selenate + a quinol. Its function is as follows. Component of the respiratory selenate reductase complex, which catalyzes the reduction of selenate to selenite. This subunit probably receives electrons directly from the membrane quinone pool and transfers the electrons to the iron-sulfur clusters of SrdB. May be the membrane anchor protein subunit of the complex. The chain is Selenate reductase subunit C from Mesobacillus selenatarsenatis (strain DSM 18680 / JCM 14380 / FERM P-15431 / SF-1).